We begin with the raw amino-acid sequence, 810 residues long: Valine--tRNA ligase (810 aa).

A 'HIGH' region motif is present at residues 45–55 (PTISGQLHIGH). The 'KMSKS' region signature appears at 534–538 (KMSKS). ATP is bound at residue lysine 537.

The protein belongs to the class-I aminoacyl-tRNA synthetase family. ValS type 2 subfamily. In terms of assembly, monomer.

The protein localises to the cytoplasm. It carries out the reaction tRNA(Val) + L-valine + ATP = L-valyl-tRNA(Val) + AMP + diphosphate. Its function is as follows. Catalyzes the attachment of valine to tRNA(Val). As ValRS can inadvertently accommodate and process structurally similar amino acids such as threonine, to avoid such errors, it has a 'posttransfer' editing activity that hydrolyzes mischarged Thr-tRNA(Val) in a tRNA-dependent manner. The sequence is that of Valine--tRNA ligase from Ehrlichia ruminantium (strain Welgevonden).